A 575-amino-acid polypeptide reads, in one-letter code: Proline--tRNA ligase (575 aa).

Belongs to the class-II aminoacyl-tRNA synthetase family. ProS type 1 subfamily. Homodimer.

It localises to the cytoplasm. The enzyme catalyses tRNA(Pro) + L-proline + ATP = L-prolyl-tRNA(Pro) + AMP + diphosphate. Functionally, catalyzes the attachment of proline to tRNA(Pro) in a two-step reaction: proline is first activated by ATP to form Pro-AMP and then transferred to the acceptor end of tRNA(Pro). As ProRS can inadvertently accommodate and process non-cognate amino acids such as alanine and cysteine, to avoid such errors it has two additional distinct editing activities against alanine. One activity is designated as 'pretransfer' editing and involves the tRNA(Pro)-independent hydrolysis of activated Ala-AMP. The other activity is designated 'posttransfer' editing and involves deacylation of mischarged Ala-tRNA(Pro). The misacylated Cys-tRNA(Pro) is not edited by ProRS. In Desulfitobacterium hafniense (strain DSM 10664 / DCB-2), this protein is Proline--tRNA ligase.